The sequence spans 563 residues: Rab escort protein 1 (563 aa).

A disordered region spans residues 538 to 563; the sequence is ELFKEETSPAENTTEEENDGGVEIED. Residues 550–563 are compositionally biased toward acidic residues; it reads TTEEENDGGVEIED.

The protein belongs to the Rab GDI family. Heterotrimer composed of the alpha subunit RGTA, the beta subunit RGTB and REP; within this trimer, RGTA and RGTB form the catalytic component, while REP mediates peptide substrate binding. In terms of tissue distribution, expressed in roots, leaves and flowers.

Its subcellular location is the cytoplasm. Functionally, substrate-binding subunit of the Rab geranylgeranyltransferase (GGTase) complex. Binds unprenylated Rab proteins and presents the substrate peptide to the catalytic component composed of the alpha subunit RGTA and the beta subunit RGTB. Preferentially binds the GDP-bound form of Rab and stimulates geranylgeranylation of various Rab GTPases in vitro. The chain is Rab escort protein 1 from Arabidopsis thaliana (Mouse-ear cress).